Consider the following 387-residue polypeptide: Succinate--CoA ligase [ADP-forming] subunit beta (387 aa).

Residues 9 to 245 (KDLLESYGLK…KSQENAKELK (237 aa)) form the ATP-grasp domain. Residues K46, 53 to 55 (GRG), E100, Y103, and E108 contribute to the ATP site. Mg(2+) contacts are provided by N200 and D214. Residues N265 and 322-324 (GIV) each bind substrate.

This sequence belongs to the succinate/malate CoA ligase beta subunit family. As to quaternary structure, heterotetramer of two alpha and two beta subunits. Mg(2+) is required as a cofactor.

It catalyses the reaction succinate + ATP + CoA = succinyl-CoA + ADP + phosphate. The catalysed reaction is GTP + succinate + CoA = succinyl-CoA + GDP + phosphate. Its pathway is carbohydrate metabolism; tricarboxylic acid cycle; succinate from succinyl-CoA (ligase route): step 1/1. Functionally, succinyl-CoA synthetase functions in the citric acid cycle (TCA), coupling the hydrolysis of succinyl-CoA to the synthesis of either ATP or GTP and thus represents the only step of substrate-level phosphorylation in the TCA. The beta subunit provides nucleotide specificity of the enzyme and binds the substrate succinate, while the binding sites for coenzyme A and phosphate are found in the alpha subunit. This is Succinate--CoA ligase [ADP-forming] subunit beta from Francisella tularensis subsp. novicida (strain U112).